The primary structure comprises 295 residues: Light-independent protochlorophyllide reductase iron-sulfur ATP-binding protein (295 aa).

Residues 39–44 (GIGKST) and K68 each bind ATP. S43 serves as a coordination point for Mg(2+). [4Fe-4S] cluster contacts are provided by C124 and C158. 209-210 (NR) serves as a coordination point for ATP.

This sequence belongs to the NifH/BchL/ChlL family. Homodimer. Protochlorophyllide reductase is composed of three subunits; ChlL, ChlN and ChlB. It depends on [4Fe-4S] cluster as a cofactor.

The catalysed reaction is chlorophyllide a + oxidized 2[4Fe-4S]-[ferredoxin] + 2 ADP + 2 phosphate = protochlorophyllide a + reduced 2[4Fe-4S]-[ferredoxin] + 2 ATP + 2 H2O. It participates in porphyrin-containing compound metabolism; chlorophyll biosynthesis (light-independent). In terms of biological role, component of the dark-operative protochlorophyllide reductase (DPOR) that uses Mg-ATP and reduced ferredoxin to reduce ring D of protochlorophyllide (Pchlide) to form chlorophyllide a (Chlide). This reaction is light-independent. The L component serves as a unique electron donor to the NB-component of the complex, and binds Mg-ATP. This is Light-independent protochlorophyllide reductase iron-sulfur ATP-binding protein from Prochlorococcus marinus (strain MIT 9312).